The sequence spans 422 residues: Vitamin D3 receptor (422 aa).

A DNA-binding region (nuclear receptor) is located at residues 22–90; the sequence is PRICGVCGDK…RLKRCVDIGM (69 aa). Positions 25, 28, 42, 45, 61, 67, 77, and 80 each coordinate Zn(2+). NR C4-type zinc fingers lie at residues 25–45 and 61–85; these read CGVC…CEGC and CPFN…LKRC. The hinge stretch occupies residues 98 to 127; the sequence is DEEVQRKRQMINKRKSEEALKESMRPKISD. Residues 128–418 form the NR LBD domain; the sequence is EQQKMIDILL…LTPLMLEVFS (291 aa). A disordered region spans residues 170-191; it reads RSSSVHTQGSPSEDSDVFTSSP. Ser-232 is a calcitriol binding site. The tract at residues 241-259 is interaction with coactivator LXXLL motif; the sequence is KMIPGFRDLIAEDQIALLK. Residues Arg-269, Ser-273, His-300, and His-392 each coordinate calcitriol. The 9aaTAD motif lies at 411 to 419; sequence PLMLEVFSD.

It belongs to the nuclear hormone receptor family. NR1 subfamily. As to quaternary structure, homodimer in the absence of bound vitamin D3. Heterodimer with RXRA after vitamin D3 binding. In terms of tissue distribution, detected in all tissues examined. Highest level in small intestine and skin.

The protein localises to the nucleus. The protein resides in the cytoplasm. Nuclear receptor for calcitriol, the active form of vitamin D3 which mediates the action of this vitamin on cells. Enters the nucleus upon vitamin D3 binding where it forms heterodimers with the retinoid X receptor/RXR. The VDR-RXR heterodimers bind to specific response elements on DNA and activate the transcription of vitamin D3-responsive target genes. Plays a central role in calcium homeostasis. Also functions as a receptor for the secondary bile acid lithocholic acid (LCA) and its metabolites. This chain is Vitamin D3 receptor (vdr), found in Xenopus laevis (African clawed frog).